A 605-amino-acid chain; its full sequence is Elongation factor 4 (605 aa).

In terms of domain architecture, tr-type G spans 4–186 (SATRNFCIIA…AIVARVPAPK (183 aa)). GTP is bound by residues 16–21 (DHGKST) and 133–136 (NKID).

The protein belongs to the TRAFAC class translation factor GTPase superfamily. Classic translation factor GTPase family. LepA subfamily.

It localises to the cell membrane. The enzyme catalyses GTP + H2O = GDP + phosphate + H(+). Functionally, required for accurate and efficient protein synthesis under certain stress conditions. May act as a fidelity factor of the translation reaction, by catalyzing a one-codon backward translocation of tRNAs on improperly translocated ribosomes. Back-translocation proceeds from a post-translocation (POST) complex to a pre-translocation (PRE) complex, thus giving elongation factor G a second chance to translocate the tRNAs correctly. Binds to ribosomes in a GTP-dependent manner. This Dehalococcoides mccartyi (strain ATCC BAA-2266 / KCTC 15142 / 195) (Dehalococcoides ethenogenes (strain 195)) protein is Elongation factor 4.